The primary structure comprises 225 residues: tRNA 2'-phosphotransferase 1 (225 aa).

The segment at 1–21 (MDCETRGRGRRGRGNRNEESR) is disordered.

This sequence belongs to the KptA/TPT1 family.

It catalyses the reaction 2'-phospho-[ligated tRNA] + NAD(+) = mature tRNA + ADP-alpha-D-ribose 1'',2''-cyclic phosphate + nicotinamide. Catalyzes the last step of tRNA splicing, the transfer of the splice junction 2'-phosphate from ligated tRNA to NAD to produce ADP-ribose 1''-2'' cyclic phosphate. This chain is tRNA 2'-phosphotransferase 1 (trpt1), found in Danio rerio (Zebrafish).